A 41-amino-acid polypeptide reads, in one-letter code: Cytochrome b559 subunit beta (41 aa).

A helical transmembrane segment spans residues 16–32 (WLAIHALAVPTVFFLGS). H20 contacts heme.

Belongs to the PsbE/PsbF family. Heterodimer of an alpha subunit and a beta subunit. PSII is composed of 1 copy each of membrane proteins PsbA, PsbB, PsbC, PsbD, PsbE, PsbF, PsbH, PsbI, PsbJ, PsbK, PsbL, PsbM, PsbT, PsbX, PsbY, PsbZ, Psb30/Ycf12, at least 3 peripheral proteins of the oxygen-evolving complex and a large number of cofactors. It forms dimeric complexes. It depends on heme b as a cofactor.

The protein resides in the plastid. It is found in the chloroplast thylakoid membrane. In terms of biological role, this b-type cytochrome is tightly associated with the reaction center of photosystem II (PSII). PSII is a light-driven water:plastoquinone oxidoreductase that uses light energy to abstract electrons from H(2)O, generating O(2) and a proton gradient subsequently used for ATP formation. It consists of a core antenna complex that captures photons, and an electron transfer chain that converts photonic excitation into a charge separation. This chain is Cytochrome b559 subunit beta, found in Oltmannsiellopsis viridis (Marine flagellate).